Here is a 100-residue protein sequence, read N- to C-terminus: Aspartyl/glutamyl-tRNA(Asn/Gln) amidotransferase subunit C (100 aa).

This sequence belongs to the GatC family. As to quaternary structure, heterotrimer of A, B and C subunits.

It carries out the reaction L-glutamyl-tRNA(Gln) + L-glutamine + ATP + H2O = L-glutaminyl-tRNA(Gln) + L-glutamate + ADP + phosphate + H(+). The catalysed reaction is L-aspartyl-tRNA(Asn) + L-glutamine + ATP + H2O = L-asparaginyl-tRNA(Asn) + L-glutamate + ADP + phosphate + 2 H(+). Allows the formation of correctly charged Asn-tRNA(Asn) or Gln-tRNA(Gln) through the transamidation of misacylated Asp-tRNA(Asn) or Glu-tRNA(Gln) in organisms which lack either or both of asparaginyl-tRNA or glutaminyl-tRNA synthetases. The reaction takes place in the presence of glutamine and ATP through an activated phospho-Asp-tRNA(Asn) or phospho-Glu-tRNA(Gln). The polypeptide is Aspartyl/glutamyl-tRNA(Asn/Gln) amidotransferase subunit C (Streptococcus equi subsp. zooepidemicus (strain H70)).